We begin with the raw amino-acid sequence, 146 residues long: MKLHELHSAEGSRRNRKRVGRGTSSGYGKTSGRGQKGQLARQGGHTRLGFEGGQMPLFRTMPKRGFKNVNRKEYAIVNLDDLNKFEDGSEVTVATLKENGLVKKELSGVKLLGNGELKVKLTVKVNKVSAAAKEAVEAAGGTVEVI.

Positions 1–13 (MKLHELHSAEGSR) are enriched in basic and acidic residues. The tract at residues 1–55 (MKLHELHSAEGSRRNRKRVGRGTSSGYGKTSGRGQKGQLARQGGHTRLGFEGGQM) is disordered. The segment covering 23–35 (TSSGYGKTSGRGQ) has biased composition (gly residues).

The protein belongs to the universal ribosomal protein uL15 family. As to quaternary structure, part of the 50S ribosomal subunit.

Functionally, binds to the 23S rRNA. The polypeptide is Large ribosomal subunit protein uL15 (Lactobacillus acidophilus (strain ATCC 700396 / NCK56 / N2 / NCFM)).